A 103-amino-acid chain; its full sequence is Large ribosomal subunit protein bL21 (103 aa).

Belongs to the bacterial ribosomal protein bL21 family. As to quaternary structure, part of the 50S ribosomal subunit. Contacts protein L20.

This protein binds to 23S rRNA in the presence of protein L20. This chain is Large ribosomal subunit protein bL21, found in Hahella chejuensis (strain KCTC 2396).